A 103-amino-acid chain; its full sequence is Histone H4 (103 aa).

Residues 1–14 (MSGRGKGGKGLGKG) are compositionally biased toward gly residues. The disordered stretch occupies residues 1–20 (MSGRGKGGKGLGKGGAKRHR). Residues 17 to 21 (KRHRK) mediate DNA binding.

The protein belongs to the histone H4 family. In terms of assembly, the nucleosome is a histone octamer containing two molecules each of H2A, H2B, H3 and H4 assembled in one H3-H4 heterotetramer and two H2A-H2B heterodimers. The octamer wraps approximately 147 bp of DNA.

It localises to the nucleus. Its subcellular location is the chromosome. In terms of biological role, core component of nucleosome. Nucleosomes wrap and compact DNA into chromatin, limiting DNA accessibility to the cellular machineries which require DNA as a template. Histones thereby play a central role in transcription regulation, DNA repair, DNA replication and chromosomal stability. DNA accessibility is regulated via a complex set of post-translational modifications of histones, also called histone code, and nucleosome remodeling. The sequence is that of Histone H4 (H4-I) from Chlamydomonas reinhardtii (Chlamydomonas smithii).